Consider the following 134-residue polypeptide: Probable histone H2A.3 (134 aa).

The protein belongs to the histone H2A family. As to quaternary structure, the nucleosome is a histone octamer containing two molecules each of H2A, H2B, H3 and H4 assembled in one H3-H4 heterotetramer and two H2A-H2B heterodimers. The octamer wraps approximately 147 bp of DNA.

Its subcellular location is the nucleus. The protein localises to the chromosome. In terms of biological role, core component of nucleosome. Nucleosomes wrap and compact DNA into chromatin, limiting DNA accessibility to the cellular machineries which require DNA as a template. Histones thereby play a central role in transcription regulation, DNA repair, DNA replication and chromosomal stability. DNA accessibility is regulated via a complex set of post-translational modifications of histones, also called histone code, and nucleosome remodeling. The sequence is that of Probable histone H2A.3 from Oryza sativa subsp. indica (Rice).